We begin with the raw amino-acid sequence, 574 residues long: Interactor of HORMAD1 protein 1 (574 aa).

The interval 113–133 (GLSKQFEEKKRRATDQSDSET) is disordered. Residues 117 to 127 (QFEEKKRRATD) show a composition bias toward basic and acidic residues. The stretch at 217-240 (MEMKSTLKNLEVLVVEQTKNLQQF) forms a coiled coil. 3 disordered regions span residues 267–324 (GHLK…GVWD), 372–393 (FSNL…GASQ), and 426–457 (TEQK…DRKQ). Over residues 272 to 284 (STSQTSPSLTQSL) the composition is skewed to low complexity. The segment covering 372-381 (FSNLPSQRAG) has biased composition (polar residues). Over residues 431–449 (RPCRKRRRGKKQQPQRSKR) the composition is skewed to basic residues. Serine 476, serine 569, and serine 570 each carry phosphoserine.

Part of the MCD recombinosome complex, at least composed of IHO1, REC114 and MEI4. Interacts with REC114. Interacts with MEI4. Interacts with HORMAD1. Interacts with ANKRD31. Detected in spermatocytes and testis (at protein level).

It localises to the chromosome. Functionally, required for DNA double-strand breaks (DSBs) formation in unsynapsed regions during meiotic recombination. Probably acts by forming a complex with MEI4 and REC114, which activates DSBs formation in unsynapsed regions, an essential step to ensure completion of synapsis. Not required for HORMAD1 functions in pairing-independent synaptonemal complex formation, ATR recruitment to unsynapsed axes, meiotic silencing of unsynapsed chromatin (MSUC) or meiotic surveillance. The chain is Interactor of HORMAD1 protein 1 from Mus musculus (Mouse).